Reading from the N-terminus, the 186-residue chain is MAKPAVFLDRDGVINVDHGYVHDEHDFQFIEGVFEATAALQRMGYLLVLVTNQSGIARGKFSEERFISLTQWMDWNFADNGVEFDGIYYCPHHAEHGIGQYKEECDCRKPKPGMFLSARDFLNIDMANSVMVGDKAEDMMAAEAAGVGTKILVRTGKPITEQGEALATVVLDSIRDVPHYLLRVKK.

Asp-9 (nucleophile) is an active-site residue. Residues Asp-9 and Asp-11 each contribute to the Mg(2+) site. Substrate contacts are provided by residues 9-11 (DRD), 17-20 (DHGY), and 51-54 (TNQS). Asp-11 serves as the catalytic Proton donor. 4 residues coordinate Zn(2+): Cys-90, His-92, Cys-105, and Cys-107. A substrate-binding site is contributed by 108–109 (RK). 2 residues coordinate Mg(2+): Asp-134 and Lys-135. A substrate-binding site is contributed by Lys-135.

Belongs to the GmhB family. Monomer. It depends on Mg(2+) as a cofactor. Requires Zn(2+) as cofactor.

The protein localises to the cytoplasm. It carries out the reaction D-glycero-beta-D-manno-heptose 1,7-bisphosphate + H2O = D-glycero-beta-D-manno-heptose 1-phosphate + phosphate. It participates in nucleotide-sugar biosynthesis; ADP-L-glycero-beta-D-manno-heptose biosynthesis; ADP-L-glycero-beta-D-manno-heptose from D-glycero-beta-D-manno-heptose 7-phosphate: step 2/4. It functions in the pathway bacterial outer membrane biogenesis; LPS core biosynthesis. Its function is as follows. Converts the D-glycero-beta-D-manno-heptose 1,7-bisphosphate intermediate into D-glycero-beta-D-manno-heptose 1-phosphate by removing the phosphate group at the C-7 position in vitro. Also catalyzes the dephosphorylation of D-glycero-alpha-D-manno-heptose-1,7-bisphosphate in vitro. This is D-glycero-beta-D-manno-heptose-1,7-bisphosphate 7-phosphatase (gmhB) from Vibrio cholerae serotype O1 (strain ATCC 39315 / El Tor Inaba N16961).